The following is a 314-amino-acid chain: Secreted frizzled-related protein 1 (314 aa).

The N-terminal stretch at 1 to 31 is a signal peptide; it reads MGIGRSEGGRRGAALGVLLALGAALLAVGSA. Positions 53–169 constitute an FZ domain; sequence TKPPQCVDIP…FPEGDVCIAM (117 aa). 5 disulfides stabilise this stretch: C58/C121, C68/C114, C105/C140, C129/C166, and C133/C157. N173 is a glycosylation site (N-linked (GlcNAc...) asparagine). Intrachain disulfides connect C186–C256, C189–C258, and C203–C306. An NTR domain is found at 186–306; that stretch reads CPPCDNELKS…FMKKMKNHEC (121 aa).

It belongs to the secreted frizzled-related protein (sFRP) family. As to quaternary structure, interacts with WNT1, WNT2 and FRZD6. Interacts with WNT4, WNT8 and MYOC. As to expression, widely expressed. Absent from lung, liver and peripheral blood leukocytes. Highest levels in heart and fetal kidney. Also expressed in testis, ovary, fetal brain and lung, leiomyomal cells, myometrial cells and vascular smooth muscle cells. Expressed in foreskin fibroblasts and in keratinocytes.

Its subcellular location is the secreted. In terms of biological role, soluble frizzled-related proteins (sFRPS) function as modulators of Wnt signaling through direct interaction with Wnts. They have a role in regulating cell growth and differentiation in specific cell types. SFRP1 decreases intracellular beta-catenin levels. Has antiproliferative effects on vascular cells, in vitro and in vivo, and can induce, in vivo, an angiogenic response. In vascular cell cycle, delays the G1 phase and entry into the S phase. In kidney development, inhibits tubule formation and bud growth in metanephroi. Inhibits WNT1/WNT4-mediated TCF-dependent transcription. The sequence is that of Secreted frizzled-related protein 1 (SFRP1) from Homo sapiens (Human).